The following is a 204-amino-acid chain: MGAYKYLEELQRKKQSDVLRFLQRVRVWEYRQKNVIHRAARPTRPDKARRLGYKAKQGFVIYRVRVRRGNRKRPVPKGATYGKPTNQGVNELKYQRSLRATAEERVGRRAANLRVLNSYWVNQDSTYKYFEVILVDPQHKAIRRDARYNWICDPVHKHREARGLTATGKKSRGINKGHKFNNTKAGRRKTWKRQNTLSLWRYRK.

The disordered stretch occupies residues 164-185; that stretch reads LTATGKKSRGINKGHKFNNTKA. Basic residues predominate over residues 169–185; that stretch reads KKSRGINKGHKFNNTKA.

The protein belongs to the eukaryotic ribosomal protein eL15 family. As to quaternary structure, component of the large ribosomal subunit (LSU). Mature yeast ribosomes consist of a small (40S) and a large (60S) subunit. The 40S small subunit contains 1 molecule of ribosomal RNA (18S rRNA) and 33 different proteins (encoded by 57 genes). The large 60S subunit contains 3 rRNA molecules (25S, 5.8S and 5S rRNA) and 46 different proteins (encoded by 81 genes).

It localises to the cytoplasm. Its function is as follows. Component of the ribosome, a large ribonucleoprotein complex responsible for the synthesis of proteins in the cell. The small ribosomal subunit (SSU) binds messenger RNAs (mRNAs) and translates the encoded message by selecting cognate aminoacyl-transfer RNA (tRNA) molecules. The large subunit (LSU) contains the ribosomal catalytic site termed the peptidyl transferase center (PTC), which catalyzes the formation of peptide bonds, thereby polymerizing the amino acids delivered by tRNAs into a polypeptide chain. The nascent polypeptides leave the ribosome through a tunnel in the LSU and interact with protein factors that function in enzymatic processing, targeting, and the membrane insertion of nascent chains at the exit of the ribosomal tunnel. This is Large ribosomal subunit protein eL15A from Saccharomyces cerevisiae (strain ATCC 204508 / S288c) (Baker's yeast).